We begin with the raw amino-acid sequence, 121 residues long: Protein SNORC (121 aa).

The N-terminal stretch at 1 to 24 is a signal peptide; it reads MASCLALRVALLLISGVLAPAVLT. The Extracellular segment spans residues 25–92; the sequence is AEGPQEPDPT…QDGGSLGPGA (68 aa). Residues 26–84 are disordered; the sequence is EGPQEPDPTLWNEPIELPSGEGPLESTSHNQEFAVSGPPFPTSAPAPEDSTPPARVDQD. A helical membrane pass occupies residues 93–113; sequence IAAIVIAALLATCVVLALVVV. Residues 114 to 121 are Cytoplasmic-facing; that stretch reads ALRKFSAS.

Interacts (via the extracellular domain) with FGF2. In terms of tissue distribution, expressed only in cartilage, including nasal, knee epiphyseal and rib tissues. In proliferation and hypertrophic chondrocytes, detected intracellulary and in the pericellular extracellular matrix. In primary spongiosa, detected only in the extracellular matrix.

Its subcellular location is the membrane. The protein resides in the cytoplasm. It localises to the secreted. The protein localises to the extracellular space. It is found in the extracellular matrix. Functionally, plays a role in the regulation of chondrocyte maturation and postnatal endochondral ossification. May inhibit cell growth stimulation induced by FGF2. This chain is Protein SNORC, found in Mus musculus (Mouse).